The following is a 180-amino-acid chain: Bifunctional protein PyrR (180 aa).

Positions 101-113 (VVLVDDVIFKGRT) match the PRPP-binding motif.

The protein belongs to the purine/pyrimidine phosphoribosyltransferase family. PyrR subfamily.

It catalyses the reaction UMP + diphosphate = 5-phospho-alpha-D-ribose 1-diphosphate + uracil. Functionally, regulates the transcription of the pyrimidine nucleotide (pyr) operon in response to exogenous pyrimidines. Also displays a weak uracil phosphoribosyltransferase activity which is not physiologically significant. In Trichormus variabilis (strain ATCC 29413 / PCC 7937) (Anabaena variabilis), this protein is Bifunctional protein PyrR.